A 492-amino-acid polypeptide reads, in one-letter code: 2,3-bisphosphoglycerate-independent phosphoglycerate mutase (492 aa).

Mn(2+) contacts are provided by D11 and S61. The Phosphoserine intermediate role is filled by S61. Residues H118, 147–148 (RD), R178, R184, 248–251 (RNDR), and K320 contribute to the substrate site. Residues D386, H390, D427, H428, and H445 each coordinate Mn(2+).

It belongs to the BPG-independent phosphoglycerate mutase family. Monomer. Requires Mn(2+) as cofactor.

The enzyme catalyses (2R)-2-phosphoglycerate = (2R)-3-phosphoglycerate. The protein operates within carbohydrate degradation; glycolysis; pyruvate from D-glyceraldehyde 3-phosphate: step 3/5. Catalyzes the interconversion of 2-phosphoglycerate and 3-phosphoglycerate. The chain is 2,3-bisphosphoglycerate-independent phosphoglycerate mutase from Campylobacter jejuni subsp. jejuni serotype O:2 (strain ATCC 700819 / NCTC 11168).